The following is a 308-amino-acid chain: Lysophosphatidic acid receptor 6 (308 aa).

Over 1-16 (MVSSNCSTEDSFKYTL) the chain is Extracellular. The N-linked (GlcNAc...) asparagine glycan is linked to Asn5. Residues 17 to 43 (YGCVFSMVFVLGLIANCVAIYIFTFTL) form a helical membrane-spanning segment. At 44–52 (KVRNETTTY) the chain is on the cytoplasmic side. A helical transmembrane segment spans residues 53 to 76 (MLNLAISDLLFVFTLPFRIYYFVV). Topologically, residues 77 to 89 (RNWPFGDVLCKIS) are extracellular. Cys86 and Cys165 are disulfide-bonded. A helical membrane pass occupies residues 90–109 (VTLFYTNMYGSILFLTCISV). Over 110–130 (DRFLAIVHPFRSKTLRTKRNA) the chain is Cytoplasmic. A helical transmembrane segment spans residues 131–151 (RIVCVAVWITVLAGSTPASFF). Residues 152–178 (QSTNRQNNTEQRTCFENFPESTWKTYL) lie on the Extracellular side of the membrane. Residues 179–206 (SRIVIFIEIVGFFIPLILNVTCSTMVLR) form a helical membrane-spanning segment. The Cytoplasmic portion of the chain corresponds to 207–224 (TLNKPLTLSRNKLSKKKV). Residues 225-250 (LKMIFVHLVIFCFCFVPYNITLILYS) traverse the membrane as a helical segment. Residues 251-269 (LMRTQTWINCSVVTAVRTM) are Extracellular-facing. Residues 270-289 (YPVTLCIAVSNCCFDPIVYY) form a helical membrane-spanning segment. The S-palmitoyl cysteine moiety is linked to residue Cys281. The Cytoplasmic portion of the chain corresponds to 290-308 (FTSDTNSELDKKQQVHQNT).

Belongs to the G-protein coupled receptor 1 family. In terms of tissue distribution, induced in activated T-cells.

Its subcellular location is the cell membrane. Binds to oleoyl-L-alpha-lysophosphatidic acid (LPA). Intracellular cAMP is involved in the receptor activation. The protein is Lysophosphatidic acid receptor 6 (LPAR6) of Gallus gallus (Chicken).